The following is a 398-amino-acid chain: Minor cardiolipin synthase ClsB (398 aa).

A helical membrane pass occupies residues 3–23 (VFIVIMIIVVIFFALILLDIF). 2 consecutive PLD phosphodiesterase domains span residues 141–168 (MQKR…AEEY) and 311–338 (YQGF…DKRS).

Belongs to the phospholipase D family. Cardiolipin synthase subfamily.

It is found in the cell membrane. Its function is as follows. Involved in the biosynthesis of cardiolipin. The chain is Minor cardiolipin synthase ClsB (clsB) from Bacillus subtilis (strain 168).